The sequence spans 48 residues: uncharacterized protein (48 aa).

The signal sequence occupies residues 1 to 21 (MLENNVFRLMILMGGVIALIA).

This is an uncharacterized protein from Bacillus anthracis.